A 1940-amino-acid polypeptide reads, in one-letter code: Myosin-3 (1940 aa).

The Myosin N-terminal SH3-like domain occupies 33–82 (DAKTYCFVVDSKEEYAKGKIKSSQDGKVTVETEDNRTLVVKPEDVYAMNP). In terms of domain architecture, Myosin motor spans 86 to 779 (DRIEDMAMLT…LLGTLEEMRD (694 aa)). At lysine 130 the chain carries N6,N6,N6-trimethyllysine. Residue 179–186 (GESGAGKT) coordinates ATP. Actin-binding stretches follow at residues 656 to 678 (LNKL…IPNE) and 758 to 772 (KFGH…GLLG). Residues 782–811 (LAKLITRTQAVCRGFLMRVEFQKMVQRRES) enclose the IQ domain. The stretch at 840–1933 (LLKSAETEKE…KTRDFTSSRM (1094 aa)) forms a coiled coil.

Belongs to the TRAFAC class myosin-kinesin ATPase superfamily. Myosin family. Muscle myosin is a hexameric protein that consists of 2 heavy chain subunits (MHC), 2 alkali light chain subunits (MLC) and 2 regulatory light chain subunits (MLC-2). In terms of tissue distribution, expressed in fetal bone, thymus, placenta, heart, brain, and liver.

The protein localises to the cytoplasm. It is found in the myofibril. Muscle contraction. The protein is Myosin-3 (MYH3) of Homo sapiens (Human).